A 347-amino-acid chain; its full sequence is Methylthioribose-1-phosphate isomerase (347 aa).

Residues 46-48, arginine 89, and glutamine 196 contribute to the substrate site; that span reads RGA. The active-site Proton donor is aspartate 237. A substrate-binding site is contributed by 247–248; that stretch reads NK.

It belongs to the eIF-2B alpha/beta/delta subunits family. MtnA subfamily.

The catalysed reaction is 5-(methylsulfanyl)-alpha-D-ribose 1-phosphate = 5-(methylsulfanyl)-D-ribulose 1-phosphate. It participates in amino-acid biosynthesis; L-methionine biosynthesis via salvage pathway; L-methionine from S-methyl-5-thio-alpha-D-ribose 1-phosphate: step 1/6. In terms of biological role, catalyzes the interconversion of methylthioribose-1-phosphate (MTR-1-P) into methylthioribulose-1-phosphate (MTRu-1-P). The chain is Methylthioribose-1-phosphate isomerase from Chloroflexus aurantiacus (strain ATCC 29366 / DSM 635 / J-10-fl).